The chain runs to 465 residues: uncharacterized protein (465 aa).

Residues 1–50 (MEITDLAAEGNALCRIDDMVMFVPFAAPGDRCTVQVVKKKRNFMQGRIVS) form the TRAM domain. Positions 63, 69, 72, and 168 each coordinate [4Fe-4S] cluster. Residues Gln293, Tyr322, Glu343, and Asp392 each coordinate S-adenosyl-L-methionine. The Nucleophile role is filled by Cys419.

The protein belongs to the class I-like SAM-binding methyltransferase superfamily. RNA M5U methyltransferase family.

This is an uncharacterized protein from Porphyromonas gingivalis (strain ATCC BAA-308 / W83).